Consider the following 293-residue polypeptide: Nucleotide-binding protein CKR_3143 (293 aa).

Gly8–Thr15 contributes to the ATP binding site. A GTP-binding site is contributed by Asp59 to Gly62.

Belongs to the RapZ-like family.

Functionally, displays ATPase and GTPase activities. The sequence is that of Nucleotide-binding protein CKR_3143 from Clostridium kluyveri (strain NBRC 12016).